A 538-amino-acid chain; its full sequence is Chaperonin GroEL (538 aa).

Residues 29–32 (TIGP), 86–90 (DGTTT), Gly-413, 476–478 (NAA), and Asp-492 contribute to the ATP site.

Belongs to the chaperonin (HSP60) family. In terms of assembly, forms a cylinder of 14 subunits composed of two heptameric rings stacked back-to-back. Interacts with the co-chaperonin GroES.

The protein localises to the cytoplasm. It carries out the reaction ATP + H2O + a folded polypeptide = ADP + phosphate + an unfolded polypeptide.. Functionally, together with its co-chaperonin GroES, plays an essential role in assisting protein folding. The GroEL-GroES system forms a nano-cage that allows encapsulation of the non-native substrate proteins and provides a physical environment optimized to promote and accelerate protein folding. The sequence is that of Chaperonin GroEL from Staphylococcus aureus (strain MRSA252).